A 353-amino-acid chain; its full sequence is UPF0283 membrane protein KPK_3110 (353 aa).

3 helical membrane passes run 70–90 (MVSA…VQWT), 99–119 (WIAL…VGSV), and 213–233 (ESTL…FIAW).

Belongs to the UPF0283 family.

It is found in the cell inner membrane. This chain is UPF0283 membrane protein KPK_3110, found in Klebsiella pneumoniae (strain 342).